We begin with the raw amino-acid sequence, 391 residues long: Formate-dependent phosphoribosylglycinamide formyltransferase (391 aa).

N(1)-(5-phospho-beta-D-ribosyl)glycinamide contacts are provided by residues 18-19 and E78; that span reads EL. ATP is bound by residues R110, K151, 156–161, 191–194, and E199; these read SSGKGQ and EEFI. An ATP-grasp domain is found at 115–305; sequence ELAHEELGIR…EFELHLRAIL (191 aa). The Mg(2+) site is built by E264 and E276. N(1)-(5-phospho-beta-D-ribosyl)glycinamide contacts are provided by residues D283, K353, and 360–361; that span reads RR.

It belongs to the PurK/PurT family. As to quaternary structure, homodimer.

It carries out the reaction N(1)-(5-phospho-beta-D-ribosyl)glycinamide + formate + ATP = N(2)-formyl-N(1)-(5-phospho-beta-D-ribosyl)glycinamide + ADP + phosphate + H(+). The protein operates within purine metabolism; IMP biosynthesis via de novo pathway; N(2)-formyl-N(1)-(5-phospho-D-ribosyl)glycinamide from N(1)-(5-phospho-D-ribosyl)glycinamide (formate route): step 1/1. Functionally, involved in the de novo purine biosynthesis. Catalyzes the transfer of formate to 5-phospho-ribosyl-glycinamide (GAR), producing 5-phospho-ribosyl-N-formylglycinamide (FGAR). Formate is provided by PurU via hydrolysis of 10-formyl-tetrahydrofolate. The polypeptide is Formate-dependent phosphoribosylglycinamide formyltransferase (Trichormus variabilis (strain ATCC 29413 / PCC 7937) (Anabaena variabilis)).